We begin with the raw amino-acid sequence, 121 residues long: Small ribosomal subunit protein uS13 (121 aa).

A disordered region spans residues Lys93–Lys121.

It belongs to the universal ribosomal protein uS13 family. In terms of assembly, part of the 30S ribosomal subunit. Forms a loose heterodimer with protein S19. Forms two bridges to the 50S subunit in the 70S ribosome.

Its function is as follows. Located at the top of the head of the 30S subunit, it contacts several helices of the 16S rRNA. In the 70S ribosome it contacts the 23S rRNA (bridge B1a) and protein L5 of the 50S subunit (bridge B1b), connecting the 2 subunits; these bridges are implicated in subunit movement. Contacts the tRNAs in the A and P-sites. The chain is Small ribosomal subunit protein uS13 from Burkholderia ambifaria (strain ATCC BAA-244 / DSM 16087 / CCUG 44356 / LMG 19182 / AMMD) (Burkholderia cepacia (strain AMMD)).